Here is a 1311-residue protein sequence, read N- to C-terminus: Clustered mitochondria protein homolog (1311 aa).

The segment covering 1-18 has biased composition (low complexity); it reads MAEKTNGAAAPNGAADAP. The disordered stretch occupies residues 1-27; that stretch reads MAEKTNGAAAPNGAADAPKSSPEQAQD. Positions 324–568 constitute a Clu domain; the sequence is DITRTQESFL…RITPLDVSWQ (245 aa). The TPR 1 repeat unit spans residues 491–525; that stretch reads IDYGAVDGKDLVATDERFVPQFQKLSKALKVKPHA. Residues 606–630 are compositionally biased toward basic and acidic residues; sequence SEVAKRGQAKKDQAAVEEKKEAKAE. 2 disordered regions span residues 606–694 and 925–966; these read SEVA…SSDR and PAPV…SSTI. Acidic residues predominate over residues 631–661; that stretch reads SEEDSDSSSEEESSSDESDSEESSSDEDEEE. A compositionally biased stretch (basic residues) spans 665–675; sequence PKKKSVPKKAA. Positions 676 to 694 are enriched in basic and acidic residues; it reads KKEEVKEEKKDEKEASSDR. TPR repeat units follow at residues 1034-1067, 1076-1109, and 1118-1151; these read ARVY…AERT, LLDY…WKII, and ITTI…CEVV. The span at 1276-1286 shows a compositional bias: basic and acidic residues; the sequence is LKFIEGTDKQK. The tract at residues 1276–1311 is disordered; the sequence is LKFIEGTDKQKKPAAKKRTGRANPKRRGAEPVSTKA. Residues 1287 to 1301 show a composition bias toward basic residues; it reads KPAAKKRTGRANPKR.

Belongs to the CLU family. May associate with the eukaryotic translation initiation factor 3 (eIF-3) complex.

It localises to the cytoplasm. Its function is as follows. mRNA-binding protein involved in proper cytoplasmic distribution of mitochondria. In Pyricularia oryzae (strain 70-15 / ATCC MYA-4617 / FGSC 8958) (Rice blast fungus), this protein is Clustered mitochondria protein homolog.